Reading from the N-terminus, the 307-residue chain is Serine/threonine-protein phosphatase 4 catalytic subunit (307 aa).

Mn(2+) is bound by residues D54, H56, D82, and N114. H115 acts as the Proton donor in catalysis. 2 residues coordinate Mn(2+): H164 and H238. At L307 the chain carries Leucine methyl ester.

Belongs to the PPP phosphatase family. PP-4 (PP-X) subfamily. Serine/threonine-protein phosphatase 4 (PP4) occurs in different assemblies of the catalytic and one or more regulatory subunits. Probably part of a PP4 PPP4C-PPP4R2-PPP4R3 complex containing Pp4-19C, PPP4R2r and flfl. Interacts with Ptpa; thereby mediating basal localization of the Miranda (Mira) complex; probably by dephosphorylation of Mira. It depends on Mn(2+) as a cofactor. Post-translationally, reversibly methyl esterified on Leu-307 by leucine carboxyl methyltransferase 1 (LCMT1) and protein phosphatase methylesterase 1 (PPME1). Carboxyl methylation influences the affinity of the catalytic subunit for the different regulatory subunits, thereby modulating the PP2A holoenzyme's substrate specificity, enzyme activity and cellular localization.

It is found in the cytoplasm. It localises to the nucleus. The protein resides in the cytoskeleton. Its subcellular location is the microtubule organizing center. The protein localises to the centrosome. The enzyme catalyses O-phospho-L-seryl-[protein] + H2O = L-seryl-[protein] + phosphate. The catalysed reaction is O-phospho-L-threonyl-[protein] + H2O = L-threonyl-[protein] + phosphate. Protein phosphatase that regulates many processes such as microtubule organization at centrosomes. The probable PP4 complex Pp4-19C-PPP4R2r-flfl (PPP4C-PPP4R2-PPP4R3) is required to prevent caspase-induced cell death (in vitro). The protein is Serine/threonine-protein phosphatase 4 catalytic subunit (Pp4-19C) of Drosophila melanogaster (Fruit fly).